The sequence spans 269 residues: Hydroxyethylthiazole kinase (269 aa).

Met45 contacts substrate. Residues Arg121 and Thr167 each coordinate ATP. Substrate is bound at residue Gly194.

The protein belongs to the Thz kinase family. Requires Mg(2+) as cofactor.

It catalyses the reaction 5-(2-hydroxyethyl)-4-methylthiazole + ATP = 4-methyl-5-(2-phosphooxyethyl)-thiazole + ADP + H(+). The protein operates within cofactor biosynthesis; thiamine diphosphate biosynthesis; 4-methyl-5-(2-phosphoethyl)-thiazole from 5-(2-hydroxyethyl)-4-methylthiazole: step 1/1. In terms of biological role, catalyzes the phosphorylation of the hydroxyl group of 4-methyl-5-beta-hydroxyethylthiazole (THZ). This is Hydroxyethylthiazole kinase from Bacillus cytotoxicus (strain DSM 22905 / CIP 110041 / 391-98 / NVH 391-98).